The sequence spans 321 residues: Homoserine kinase (321 aa).

The protein belongs to the pseudomonas-type ThrB family.

It catalyses the reaction L-homoserine + ATP = O-phospho-L-homoserine + ADP + H(+). Its pathway is amino-acid biosynthesis; L-threonine biosynthesis; L-threonine from L-aspartate: step 4/5. The sequence is that of Homoserine kinase from Xanthobacter autotrophicus (strain ATCC BAA-1158 / Py2).